The sequence spans 416 residues: MNLETVAKVDPEIVAAVRGELQRQRTHLELIASENFVSQAVMEAYSCVLTNKYAEGYPGKRYYGGCEWADVVENLARERAKALFGAEHANVQPHSGSQANTAVYLAVLNPGDKALGMNLAHGGHLTHGSPVSLSGKYYNFCFYGVDAKTGRIDYDAVARIAREERPRLIVAGASAYPRVIDFARFREIADEVGALLMVDMAHIAGLVAAGIHPNPVPYAHFVTTTTHKTMRGPRGGIILTTREYARDIDKAVFPGVQGGPLMHVIAAKAVALKEAMLPEFKRYQEQIVTNARTLADALMGYGFNLVSGGTDNHLMLVDLRNKNITGREAEDILASVQITVNKNAIPFDPQKPSVTSGIRLGTAALTSRGMDADAMVQVARAIDLALSYGPDEKKLEEARGIVAELCRAFPLYQELD.

(6S)-5,6,7,8-tetrahydrofolate is bound by residues L119 and 123-125 (GHL). K228 bears the N6-(pyridoxal phosphate)lysine mark.

The protein belongs to the SHMT family. In terms of assembly, homodimer. Pyridoxal 5'-phosphate serves as cofactor.

The protein resides in the cytoplasm. It catalyses the reaction (6R)-5,10-methylene-5,6,7,8-tetrahydrofolate + glycine + H2O = (6S)-5,6,7,8-tetrahydrofolate + L-serine. It functions in the pathway one-carbon metabolism; tetrahydrofolate interconversion. The protein operates within amino-acid biosynthesis; glycine biosynthesis; glycine from L-serine: step 1/1. Catalyzes the reversible interconversion of serine and glycine with tetrahydrofolate (THF) serving as the one-carbon carrier. This reaction serves as the major source of one-carbon groups required for the biosynthesis of purines, thymidylate, methionine, and other important biomolecules. Also exhibits THF-independent aldolase activity toward beta-hydroxyamino acids, producing glycine and aldehydes, via a retro-aldol mechanism. The sequence is that of Serine hydroxymethyltransferase from Moorella thermoacetica (strain ATCC 39073 / JCM 9320).